Here is a 161-residue protein sequence, read N- to C-terminus: Cyclic pyranopterin monophosphate synthase (161 aa).

Substrate-binding positions include 75–77 (MCH) and 115–116 (ME). Residue aspartate 130 is part of the active site.

The protein belongs to the MoaC family. Homohexamer; trimer of dimers.

The catalysed reaction is (8S)-3',8-cyclo-7,8-dihydroguanosine 5'-triphosphate = cyclic pyranopterin phosphate + diphosphate. It participates in cofactor biosynthesis; molybdopterin biosynthesis. Catalyzes the conversion of (8S)-3',8-cyclo-7,8-dihydroguanosine 5'-triphosphate to cyclic pyranopterin monophosphate (cPMP). This chain is Cyclic pyranopterin monophosphate synthase, found in Bacillus cereus (strain 03BB102).